A 122-amino-acid chain; its full sequence is Succinate dehydrogenase assembly factor 2, mitochondrial (122 aa).

Belongs to the SDHAF2 family. In terms of assembly, interacts with the flavoprotein subunit within the SDH catalytic dimer.

It is found in the mitochondrion matrix. Its function is as follows. Plays an essential role in the assembly of succinate dehydrogenase (SDH), an enzyme complex (also referred to as respiratory complex II) that is a component of both the tricarboxylic acid (TCA) cycle and the mitochondrial electron transport chain, and which couples the oxidation of succinate to fumarate with the reduction of ubiquinone (coenzyme Q) to ubiquinol. Required for flavinylation (covalent attachment of FAD) of the flavoprotein subunit of the SDH catalytic dimer. This Caenorhabditis briggsae protein is Succinate dehydrogenase assembly factor 2, mitochondrial.